The sequence spans 222 residues: Probable RNA 2'-phosphotransferase (222 aa).

Belongs to the KptA/TPT1 family.

Removes the 2'-phosphate from RNA via an intermediate in which the phosphate is ADP-ribosylated by NAD followed by a presumed transesterification to release the RNA and generate ADP-ribose 1''-2''-cyclic phosphate (APPR&gt;P). May function as an ADP-ribosylase. In Haloarcula marismortui (strain ATCC 43049 / DSM 3752 / JCM 8966 / VKM B-1809) (Halobacterium marismortui), this protein is Probable RNA 2'-phosphotransferase.